A 380-amino-acid chain; its full sequence is Succinyl-diaminopimelate desuccinylase (380 aa).

Residue His71 coordinates Zn(2+). Asp73 is an active-site residue. Asp104 is a Zn(2+) binding site. The active-site Proton acceptor is the Glu136. Zn(2+) contacts are provided by Glu137, Glu166, and His351.

It belongs to the peptidase M20A family. DapE subfamily. Homodimer. It depends on Zn(2+) as a cofactor. Requires Co(2+) as cofactor.

The enzyme catalyses N-succinyl-(2S,6S)-2,6-diaminopimelate + H2O = (2S,6S)-2,6-diaminopimelate + succinate. Its pathway is amino-acid biosynthesis; L-lysine biosynthesis via DAP pathway; LL-2,6-diaminopimelate from (S)-tetrahydrodipicolinate (succinylase route): step 3/3. Its function is as follows. Catalyzes the hydrolysis of N-succinyl-L,L-diaminopimelic acid (SDAP), forming succinate and LL-2,6-diaminopimelate (DAP), an intermediate involved in the bacterial biosynthesis of lysine and meso-diaminopimelic acid, an essential component of bacterial cell walls. The polypeptide is Succinyl-diaminopimelate desuccinylase (Ehrlichia canis (strain Jake)).